Here is a 65-residue protein sequence, read N- to C-terminus: Large ribosomal subunit protein bL35 (65 aa).

Residues 1-26 (MPKIKTHRGAAKRFSKTGTGKIKRSH) show a composition bias toward basic residues. Positions 1-41 (MPKIKTHRGAAKRFSKTGTGKIKRSHAFTSHILTSKTRKNK) are disordered.

The protein belongs to the bacterial ribosomal protein bL35 family.

This Geotalea daltonii (strain DSM 22248 / JCM 15807 / FRC-32) (Geobacter daltonii) protein is Large ribosomal subunit protein bL35.